Consider the following 908-residue polypeptide: Collagen alpha-2(I) chain (908 aa).

A compositionally biased stretch (low complexity) spans 1–36 (GPMGIMGPRGPPGASGAPGPAGEPGEPGQTGPAGAR). Disordered stretches follow at residues 1–211 (GPMG…GITG) and 227–908 (IPGP…PGPS). Residues 45 to 59 (AGEDGHPGKPGRPGE) show a composition bias toward basic and acidic residues. 8 stretches are compositionally biased toward low complexity: residues 129-158 (VGAP…SAGP), 183-197 (AGPR…VSGP), 234-249 (PGPV…RGIV), 293-309 (STGP…RGIP), 403-418 (AGIA…PGFQ), 465-474 (PAGPIGSRGP), 526-542 (RRGA…AGAN), and 569-589 (VGPA…QPGA). Residues 590-599 (KGERGTKGPK) are compositionally biased toward basic and acidic residues. Over residues 602–617 (NGPVGPTGPVGAAGPA) the composition is skewed to low complexity. The segment covering 627–636 (GSRGDGGPPG) has biased composition (gly residues). Composition is skewed to low complexity over residues 637 to 647 (ATGFPGAAGRT), 701 to 730 (AGEP…IPGS), 745 to 775 (EPGP…APGE), and 785 to 805 (PGPA…PSGP). Positions 809 to 820 (RGDKGEPGDKGP) are enriched in basic and acidic residues. The span at 893–908 (AGPPGPPGPPGPPGPS) shows a compositional bias: pro residues.

This sequence belongs to the fibrillar collagen family. As to quaternary structure, trimers of one alpha 2(I) and two alpha 1(I) chains. Interacts (via C-terminus) with TMEM131 (via PapD-L domain); the interaction is direct and is involved in assembly and TRAPPIII ER-to-Golgi transport complex-dependent secretion of collagen. In terms of processing, prolines at the third position of the tripeptide repeating unit (G-X-Y) are hydroxylated in some or all of the chains. In terms of tissue distribution, forms the fibrils of tendon, ligaments and bones. In bones, the fibrils are mineralized with calcium hydroxyapatite.

It localises to the secreted. The protein localises to the extracellular space. It is found in the extracellular matrix. Its function is as follows. Type I collagen is a member of group I collagen (fibrillar forming collagen). The sequence is that of Collagen alpha-2(I) chain from Toxodon sp.